A 23-amino-acid chain; its full sequence is Hemocyanin subunit 4 (23 aa).

It belongs to the tyrosinase family. Hemocyanin subfamily. Hemolymph.

The protein localises to the secreted. The protein resides in the extracellular space. Its function is as follows. Hemocyanins are copper-containing oxygen carriers occurring freely dissolved in the hemolymph of many mollusks and arthropods. This chain is Hemocyanin subunit 4, found in Carcinus maenas (Common shore crab).